We begin with the raw amino-acid sequence, 290 residues long: 33 kDa chaperonin (290 aa).

Disulfide bonds link Cys-235–Cys-237 and Cys-268–Cys-271.

The protein belongs to the HSP33 family. Post-translationally, under oxidizing conditions two disulfide bonds are formed involving the reactive cysteines. Under reducing conditions zinc is bound to the reactive cysteines and the protein is inactive.

The protein localises to the cytoplasm. Functionally, redox regulated molecular chaperone. Protects both thermally unfolding and oxidatively damaged proteins from irreversible aggregation. Plays an important role in the bacterial defense system toward oxidative stress. The protein is 33 kDa chaperonin of Streptococcus pneumoniae (strain CGSP14).